The chain runs to 515 residues: Nectin-1 (515 aa).

Residues 1-30 (MARMGLAGAAGRWWGLALGLTAFFLPGAHT) form the signal peptide. The 111-residue stretch at 31-141 (QVVQVNDSMY…GNRESQLNLT (111 aa)) folds into the Ig-like V-type domain. Over 31–355 (QVVQVNDSMY…GRRAGQVPTA (325 aa)) the chain is Extracellular. 8 N-linked (GlcNAc...) asparagine glycosylation sites follow: Asn36, Asn72, Asn139, Asn202, Asn286, Asn297, Asn307, and Asn332. Cysteines 51 and 124 form a disulfide. 2 Ig-like C2-type domains span residues 145-243 (KPTN…TLNV) and 247-334 (PEVT…VNIT). Cystine bridges form between Cys172/Cys226 and Cys269/Cys316. Residues 282–299 (WTTLNGSLPKGVEAQNRT) form an interaction with FGFR region. The chain crosses the membrane as a helical span at residues 356–376 (IIGGVVGSILLVLFVVGGIVV). The Cytoplasmic portion of the chain corresponds to 377-515 (ALCRRRHTFK…SFISKKEWYV (139 aa)). The segment at 400 to 486 (YSKAGIPQHH…DGYGDRTLGY (87 aa)) is disordered. 3 positions are modified to phosphoserine: Ser422, Ser434, and Ser435. Residue Tyr436 is modified to Phosphotyrosine. Acidic residues predominate over residues 436–445 (YEEEEEEEGG). Residues 446-464 (GGERKVGGPHPKYDEDAKR) show a composition bias toward basic and acidic residues. Residue Ser509 is modified to Phosphoserine.

It belongs to the nectin family. In terms of assembly, (Microbial infection) Interacts with herpes pseudorabies virus/PRV envelope glycoprotein D.

The protein resides in the cell membrane. It is found in the cell junction. The protein localises to the adherens junction. It localises to the presynaptic cell membrane. Its function is as follows. (Microbial infection) Acts as a receptor for herpes simplex virus 1/HHV-1, herpes simplex virus 2/HHV-2, and pseudorabies virus/PRV. This chain is Nectin-1, found in Sus scrofa (Pig).